A 501-amino-acid chain; its full sequence is Flagellin (501 aa).

This sequence belongs to the bacterial flagellin family.

Its subcellular location is the secreted. The protein localises to the bacterial flagellum. Flagellin is the subunit protein which polymerizes to form the filaments of bacterial flagella. In Aquifex pyrophilus, this protein is Flagellin (flaA).